Here is a 161-residue protein sequence, read N- to C-terminus: V-type proton ATPase 16 kDa proteolipid subunit c 2 (161 aa).

The Lumenal segment spans residues 1–15 (MSYDLETAERAAYAP). A helical membrane pass occupies residues 16 to 36 (FFGYMGAASAQIFTVLGAAYG). Topologically, residues 37-58 (TAKSAVGICSMGVMRPELIMKS) are cytoplasmic. The helical transmembrane segment at 59–79 (VIPVIMAGIIGIYGLVVAMVL) threads the bilayer. Residues 80–98 (KGKVTSASAGYDLNKGFAH) lie on the Lumenal side of the membrane. Residues 99 to 119 (LAAGLTCGLCGLGAGYAIGIV) traverse the membrane as a helical segment. The Cytoplasmic portion of the chain corresponds to 120-137 (GDAGVRGTAQQPRLFVGM). A helical transmembrane segment spans residues 138 to 158 (ILILIFSEVLGLYGMIVALIL). The Lumenal segment spans residues 159–161 (GTS).

This sequence belongs to the V-ATPase proteolipid subunit family. As to quaternary structure, V-ATPase is a heteromultimeric enzyme made up of two complexes: the ATP-hydrolytic V1 complex and the proton translocation V0 complex. The V1 complex consists of three catalytic AB heterodimers that form a heterohexamer, three peripheral stalks each consisting of EG heterodimers, one central rotor including subunits D and F, and the regulatory subunits C and H. The proton translocation complex V0 consists of the proton transport subunit a, a ring of proteolipid subunits c9c'', rotary subunit d, subunits e and f, and the accessory subunits vah-19/Ac45 and vah-20/PRR. In terms of tissue distribution, expressed in the H-shaped excretory cell, rectum, and a pair of cells posterior to the anus.

It localises to the membrane. In terms of biological role, proton-conducting pore forming subunit of the V0 complex of vacuolar(H+)-ATPase (V-ATPase), a multisubunit enzyme composed of a peripheral complex (V1) that hydrolyzes ATP and a membrane integral complex (V0) that translocates protons. V-ATPase is responsible for acidifying and maintaining the pH of intracellular compartments and in some cell types, is targeted to the plasma membrane, where it is responsible for acidifying the extracellular environment. Involved in necrotic cell death. Required along with other vacuolar ATPase components for the removal of protein aggregates which form in immature oocytes in the distal gonad. This removal occurs as the oocytes mature and move to the proximal gonad, is triggered by the introduction of sperm through mating and occurs before fertilization. The introduction of sperm triggers V-ATPase accumulation in proximal oocytes and induces lysosomal acidification which leads to engulfing of protein aggregates by lysosomes and subsequent clearance of the aggregates. Lysosomal acidification also leads to changes in mitochondrial morphology and function. Mitochondria in distal immature oocytes are fragmented, produce high levels of reactive oxygen species (ROS) and have high membrane potential, indicative of metabolic inactivity. In contrast, mitochondria in proximal mature oocytes are tubular with lower ROS levels and membrane potential, indicative of an active metabolic state required for aggregate mobilization before clearance. The sequence is that of V-type proton ATPase 16 kDa proteolipid subunit c 2 from Caenorhabditis elegans.